Here is an 876-residue protein sequence, read N- to C-terminus: Alanine--tRNA ligase (876 aa).

Lys-74 is modified (N6-acetyllysine). His-564, His-568, Cys-666, and His-670 together coordinate Zn(2+).

The protein belongs to the class-II aminoacyl-tRNA synthetase family. Homotetramer. It depends on Zn(2+) as a cofactor.

It is found in the cytoplasm. The catalysed reaction is tRNA(Ala) + L-alanine + ATP = L-alanyl-tRNA(Ala) + AMP + diphosphate. Its function is as follows. Catalyzes the attachment of alanine to tRNA(Ala) in a two-step reaction: alanine is first activated by ATP to form Ala-AMP and then transferred to the acceptor end of tRNA(Ala). Also edits incorrectly charged Ser-tRNA(Ala) and Gly-tRNA(Ala) via its editing domain. The polypeptide is Alanine--tRNA ligase (Shigella boydii serotype 18 (strain CDC 3083-94 / BS512)).